A 186-amino-acid chain; its full sequence is Elongation factor P (186 aa).

It belongs to the elongation factor P family.

It localises to the cytoplasm. The protein operates within protein biosynthesis; polypeptide chain elongation. Functionally, involved in peptide bond synthesis. Stimulates efficient translation and peptide-bond synthesis on native or reconstituted 70S ribosomes in vitro. Probably functions indirectly by altering the affinity of the ribosome for aminoacyl-tRNA, thus increasing their reactivity as acceptors for peptidyl transferase. The sequence is that of Elongation factor P from Brucella abortus (strain S19).